An 878-amino-acid chain; its full sequence is Outer membrane usher protein FimD (878 aa).

The N-terminal stretch at 1–45 (MSYLNLRLYQRNTQCLHIRKHRLAGFFVRLVVACAFAAQAPLSSA) is a signal peptide. An intrachain disulfide couples Cys855 to Cys877.

This sequence belongs to the fimbrial export usher family.

The protein localises to the cell outer membrane. In terms of biological role, involved in the export and assembly of FimA fimbrial subunits across the outer membrane. This Escherichia coli (strain K12) protein is Outer membrane usher protein FimD (fimD).